The chain runs to 339 residues: MIRVAAAGGGTGGHLYPLLAILETLSKDVETKVLFFAVKGKIDEKVVKQEHPEYEVVTLDVRGLFRPLYHPKNFWRAAKVVNAILKAKKELLRFKPDVIVLTGGYISGVVGLAAKNMGVPIFLHEQNVVPGLAVKTVAKYARKIFVSFERTREFLTEWKDRVLFTGCPVRETKEEVDLEDFVLVLGGSLGSDLINSLMEEVYRRISCIRFVHSTGSRRWAERLSVFPNVTAHPYIENMSSFWKKARASISRAGASTIGEMIYYGVPGVLIPWEGSAESHQLENALEAERLGYAIVVREKEATPQKIIEAIDKTMKKGKIEKMKENPATIISREILGEIR.

UDP-N-acetyl-alpha-D-glucosamine contacts are provided by residues 11–13, Asn127, Arg170, Ser188, Ile235, and Gln280; that span reads TGG.

It belongs to the glycosyltransferase 28 family. MurG subfamily.

The protein localises to the cell inner membrane. The enzyme catalyses di-trans,octa-cis-undecaprenyl diphospho-N-acetyl-alpha-D-muramoyl-L-alanyl-D-glutamyl-meso-2,6-diaminopimeloyl-D-alanyl-D-alanine + UDP-N-acetyl-alpha-D-glucosamine = di-trans,octa-cis-undecaprenyl diphospho-[N-acetyl-alpha-D-glucosaminyl-(1-&gt;4)]-N-acetyl-alpha-D-muramoyl-L-alanyl-D-glutamyl-meso-2,6-diaminopimeloyl-D-alanyl-D-alanine + UDP + H(+). The protein operates within cell wall biogenesis; peptidoglycan biosynthesis. Cell wall formation. Catalyzes the transfer of a GlcNAc subunit on undecaprenyl-pyrophosphoryl-MurNAc-pentapeptide (lipid intermediate I) to form undecaprenyl-pyrophosphoryl-MurNAc-(pentapeptide)GlcNAc (lipid intermediate II). This Thermotoga neapolitana (strain ATCC 49049 / DSM 4359 / NBRC 107923 / NS-E) protein is UDP-N-acetylglucosamine--N-acetylmuramyl-(pentapeptide) pyrophosphoryl-undecaprenol N-acetylglucosamine transferase.